Reading from the N-terminus, the 82-residue chain is Large ribosomal subunit protein bL27 (82 aa).

The interval 1–26 (MAHKKGQGASRNGRDSESKRLGMKVG) is disordered.

Belongs to the bacterial ribosomal protein bL27 family.

The chain is Large ribosomal subunit protein bL27 from Chlamydia felis (strain Fe/C-56) (Chlamydophila felis).